Reading from the N-terminus, the 307-residue chain is Protoheme IX farnesyltransferase (307 aa).

The next 9 membrane-spanning stretches (helical) occupy residues 31-51 (VTQL…PGMV), 55-75 (VLIG…AINC), 103-123 (TLVF…VYAN), 125-145 (LTMW…TILL), 153-173 (IVIG…AVAG), 179-199 (AWFL…ALAL), 223-243 (LLHI…PFVY), 246-266 (SGYI…AYAW), and 285-305 (ILYL…KFVP).

This sequence belongs to the UbiA prenyltransferase family. Protoheme IX farnesyltransferase subfamily.

It localises to the cell inner membrane. The enzyme catalyses heme b + (2E,6E)-farnesyl diphosphate + H2O = Fe(II)-heme o + diphosphate. It participates in porphyrin-containing compound metabolism; heme O biosynthesis; heme O from protoheme: step 1/1. In terms of biological role, converts heme B (protoheme IX) to heme O by substitution of the vinyl group on carbon 2 of heme B porphyrin ring with a hydroxyethyl farnesyl side group. This is Protoheme IX farnesyltransferase from Cupriavidus necator (strain ATCC 17699 / DSM 428 / KCTC 22496 / NCIMB 10442 / H16 / Stanier 337) (Ralstonia eutropha).